The chain runs to 311 residues: MTKPAVQKSGLHPRNRHRDRYDFPALKQSYPALIPFVKVNAYGDESVDFANPEAVKTLNQALLQHFYQIEHWTIPDGFLCPPIPGRADYVHHLADLLAEDNRSVVPRDASVLDVGCGANCVYPLIGHREYGWRFTGSEVNPLAMKAANETIEANSGLNRSIRLRRQKNSKAILAGIIHKNDSFDAVMCNPPFHASAEDAREGSQRKLHNLGLDKRSPLNFGGQQDELWCEGGELAFIGQMIKDSVSFGRQCLWFTSLVSRKEHLPEIYRALEAVDAEKVRTIDMAQGQKQSRFVAWSFLDTAARARWLQKR.

It belongs to the methyltransferase superfamily. METTL16/RlmF family.

It is found in the cytoplasm. It catalyses the reaction adenosine(1618) in 23S rRNA + S-adenosyl-L-methionine = N(6)-methyladenosine(1618) in 23S rRNA + S-adenosyl-L-homocysteine + H(+). In terms of biological role, specifically methylates the adenine in position 1618 of 23S rRNA. The chain is Ribosomal RNA large subunit methyltransferase F from Pectobacterium atrosepticum (strain SCRI 1043 / ATCC BAA-672) (Erwinia carotovora subsp. atroseptica).